We begin with the raw amino-acid sequence, 470 residues long: MHFSIPETESRSGDSGGSTYVAYNIHVNGVLHCRVRYSQLLGLHEQLRKEYGANVLPAFPPKKLFSLTPAEVEQRREQLEKYMQAVRQDPLLGSSETFNSFLRRAQQETQQVPTEEVSLEVLLSDGQKVLVNVLTSDQTEDVLEAVAAKLDLPDDLIGYFSLFLVREKEDGAFSFVRKLQEFELPYVSVTSLRSQEYKIVLRKSYWDSAYDDDVMENRVGLNLLYAQTVSDIEHGWILVTKEQHRQLKSLQEKVSKKEFLRLAQTLRHYGYLRFDACVADFPEKDCPVVVSAGNSELSLQLRLPGQQLREGSFRVTRMRCWRVTSSVPLPSGGTSTPSRGRGEVRLELAFEYLMSKDRLQWVTITSPQAIMMSICLQSMVDELMVKKSGGSIRKMLRRRVGGNLRRSDSQQAVKSPPLLESPDASRESMVKLSSKLSAVSLRGIGSPSTDASASAVHGNFAFEGIGDEDL.

The region spanning 1–109 (MHFSIPETES…SFLRRAQQET (109 aa)) is the PX domain. R36, S38, K62, and R75 together coordinate a 1,2-diacyl-sn-glycero-3-phospho-(1D-myo-inositol-3-phosphate). Residues 115–206 (EEVSLEVLLS…YKIVLRKSYW (92 aa)) enclose the Ras-associating domain. Residues 115-432 (EEVSLEVLLS…DASRESMVKL (318 aa)) are FERM-like. Residues 270–432 (GYLRFDACVA…DASRESMVKL (163 aa)) form a PTB-like F3 module region. Positions 401–425 (GGNLRRSDSQQAVKSPPLLESPDAS) are disordered. A phosphoserine mark is found at S407, S409, S415, S421, S437, and S440.

The protein belongs to the sorting nexin family. As to quaternary structure, monomer. Interacts with APP (via cytoplasmic YXNPXY motif). Interacts with KIF1B. Interacts with the C-termini of P-selectin, PTC, LDLR, VLDLR, LRP1 and LRP8. Interacts with KRIT1 (via N-terminus). Interacts with HRAS. Interacts with ITGB1 and ITGB5 (via NPxY motif). Interacts with CCDC22 and CCDC93; the interaction associates SNX17 with the CCC complex. Interacts (via C-terminus) with VPS26C and VPS35L; the interactions are direct and associate SNX17 with the retriever complex.

The protein resides in the cytoplasm. It localises to the early endosome. It is found in the cytoplasmic vesicle membrane. In terms of biological role, critical regulator of endosomal recycling of numerous surface proteins, including integrins, signaling receptor and channels. Binds to NPxY sequences in the cytoplasmic tails of target cargos. Associates with retriever and CCC complexes to prevent lysosomal degradation and promote cell surface recycling of numerous cargos such as integrins ITGB1, ITGB5 and their associated alpha subunits. Also required for maintenance of normal cell surface levels of APP and LRP1. Interacts with membranes containing phosphatidylinositol 3-phosphate (PtdIns(3P)). The protein is Sorting nexin-17 (Snx17) of Rattus norvegicus (Rat).